Consider the following 644-residue polypeptide: 3D-(3,5/4)-trihydroxycyclohexane-1,2-dione hydrolase (644 aa).

Glu-65 lines the thiamine diphosphate pocket. Positions 442-522 (SLPGDLQRMW…INVLLFDNSG (81 aa)) are thiamine pyrophosphate binding. Mg(2+)-binding residues include Asp-493 and Asn-520.

Belongs to the TPP enzyme family. Mg(2+) serves as cofactor. Thiamine diphosphate is required as a cofactor.

The catalysed reaction is 3D-3,5/4-trihydroxycyclohexane-1,2-dione + H2O = 5-deoxy-D-glucuronate + H(+). The protein operates within polyol metabolism; myo-inositol degradation into acetyl-CoA; acetyl-CoA from myo-inositol: step 3/7. Involved in the cleavage of the C1-C2 bond of 3D-(3,5/4)-trihydroxycyclohexane-1,2-dione (THcHDO) to yield 5-deoxy-glucuronate (5DG). In Bacillus thuringiensis (strain Al Hakam), this protein is 3D-(3,5/4)-trihydroxycyclohexane-1,2-dione hydrolase.